We begin with the raw amino-acid sequence, 184 residues long: Major urinary protein 3 (184 aa).

Residues 1 to 22 (MKLLLPLLLLLCLELTLVCIHA) form the signal peptide. Residue Asn-66 is glycosylated (N-linked (GlcNAc...) asparagine). Cys-86 and Cys-179 form a disulfide bridge.

It belongs to the calycin superfamily. Lipocalin family. Glycosylated. As to expression, abundant in the urine of adult male mice but absent from that of females.

The protein localises to the secreted. Binds pheromones that are released from drying urine of males. These pheromones affect the sexual behavior of females. This chain is Major urinary protein 3 (Mup3), found in Mus musculus (Mouse).